We begin with the raw amino-acid sequence, 203 residues long: Holliday junction branch migration complex subunit RuvA (203 aa).

A domain I region spans residues 1–63 (MYEYLKGLVT…DTDITLFGFY (63 aa)). The interval 64–142 (DLDEKQLFQK…DLEQSATLVG (79 aa)) is domain II. The tract at residues 143–153 (QTAIDLGSQGD) is flexible linker. The tract at residues 153 to 203 (DSPELSDALAALSALGYSAREVKAITPKLTDFAAQTTDQYLREGLRLLMKK) is domain III.

Belongs to the RuvA family. Homotetramer. Forms an RuvA(8)-RuvB(12)-Holliday junction (HJ) complex. HJ DNA is sandwiched between 2 RuvA tetramers; dsDNA enters through RuvA and exits via RuvB. An RuvB hexamer assembles on each DNA strand where it exits the tetramer. Each RuvB hexamer is contacted by two RuvA subunits (via domain III) on 2 adjacent RuvB subunits; this complex drives branch migration. In the full resolvosome a probable DNA-RuvA(4)-RuvB(12)-RuvC(2) complex forms which resolves the HJ.

It is found in the cytoplasm. The RuvA-RuvB-RuvC complex processes Holliday junction (HJ) DNA during genetic recombination and DNA repair, while the RuvA-RuvB complex plays an important role in the rescue of blocked DNA replication forks via replication fork reversal (RFR). RuvA specifically binds to HJ cruciform DNA, conferring on it an open structure. The RuvB hexamer acts as an ATP-dependent pump, pulling dsDNA into and through the RuvAB complex. HJ branch migration allows RuvC to scan DNA until it finds its consensus sequence, where it cleaves and resolves the cruciform DNA. This chain is Holliday junction branch migration complex subunit RuvA, found in Latilactobacillus sakei subsp. sakei (strain 23K) (Lactobacillus sakei subsp. sakei).